The primary structure comprises 77 residues: MKAFIVILSIAIVLLLIVSIKETSAKDCKQECVKRYTKGDLTNFLKAEYEPKNRGGICYCEFTCHVKFYIYLKHEMD.

The signal sequence occupies residues 1–25 (MKAFIVILSIAIVLLLIVSIKETSA). Positions 26 to 46 (KDCKQECVKRYTKGDLTNFLK) are excised as a propeptide.

This sequence belongs to the scolopendra neurotoxin 3 family. Post-translationally, contains 2 disulfide bonds. Expressed by the venom gland.

The protein resides in the secreted. This is Putative neurotoxin 1 from Scolopendra subspinipes (Vietnamese centipede).